We begin with the raw amino-acid sequence, 274 residues long: Large ribosomal subunit protein uL2 (274 aa).

Positions 223–265 (VVMNPVDHPHGGGEGRTSGGRHPVSPWGVPTKGYKTRSNKRTD) are disordered.

The protein belongs to the universal ribosomal protein uL2 family. In terms of assembly, part of the 50S ribosomal subunit. Forms a bridge to the 30S subunit in the 70S ribosome.

In terms of biological role, one of the primary rRNA binding proteins. Required for association of the 30S and 50S subunits to form the 70S ribosome, for tRNA binding and peptide bond formation. It has been suggested to have peptidyltransferase activity; this is somewhat controversial. Makes several contacts with the 16S rRNA in the 70S ribosome. The sequence is that of Large ribosomal subunit protein uL2 from Vibrio vulnificus (strain CMCP6).